A 130-amino-acid chain; its full sequence is Small ribosomal subunit protein uS17m (130 aa).

Belongs to the universal ribosomal protein uS17 family. In terms of assembly, component of the mitochondrial ribosome small subunit (28S) which comprises a 12S rRNA and about 30 distinct proteins.

It localises to the mitochondrion. In Bos taurus (Bovine), this protein is Small ribosomal subunit protein uS17m (MRPS17).